We begin with the raw amino-acid sequence, 314 residues long: D-alanine--D-alanine ligase (314 aa).

An ATP-grasp domain is found at 115 to 310 (KQVWQSVGLV…FNELVLEILA (196 aa)). 141 to 196 (LDSLGGQGFVKPAHEGSSIGMSVVSTAQELKAAYEKAAHYDAKVLVERRIVGREFT) is a binding site for ATP. Residues Asp-264, Glu-277, and Asn-279 each coordinate Mg(2+).

Belongs to the D-alanine--D-alanine ligase family. It depends on Mg(2+) as a cofactor. The cofactor is Mn(2+).

It is found in the cytoplasm. The catalysed reaction is 2 D-alanine + ATP = D-alanyl-D-alanine + ADP + phosphate + H(+). It participates in cell wall biogenesis; peptidoglycan biosynthesis. Cell wall formation. This Saccharophagus degradans (strain 2-40 / ATCC 43961 / DSM 17024) protein is D-alanine--D-alanine ligase.